Reading from the N-terminus, the 318-residue chain is Myoblast determination protein 1 (318 aa).

A Peptide (Met-Gly) (interchain with G-Cter in ubiquitin) cross-link involves residue M1. K104 bears the N6-methyllysine; by EHMT2 mark. A bHLH domain is found at 109–160 (DRRKAATMRERRRLSKVNEAFETLKRCTSSNPNQRLPKVEILRNAIRYIEGL). Disordered stretches follow at residues 175-224 (AAFY…RQNG) and 262-318 (SPAA…YQVL). Residues 196-206 (SDASSPRSNCS) show a composition bias toward polar residues. The span at 262–271 (SPAAPSLLLP) shows a compositional bias: low complexity. Residues 272–282 (DAPPESPPGPP) are compositionally biased toward pro residues. Polar residues predominate over residues 290-304 (AEQGTQTPSPDSTPQ).

Efficient DNA binding requires dimerization with another bHLH protein. Seems to form active heterodimers with ITF-2. Interacts with SUV39H1. Interacts with DDX5. Interacts with CHD2. Interacts with TSC22D3. Interacts with SETD3. Interacts with P-TEFB complex; promotes the transcriptional activity of MYOD1 through its CDK9-mediated phosphorylation. Interacts with CSRP3. Interacts with NUPR1. Phosphorylated by CDK9. This phosphorylation promotes its function in muscle differentiation. In terms of processing, acetylated by a complex containing EP300 and PCAF. The acetylation is essential to activate target genes. Conversely, its deacetylation by SIRT1 inhibits its function. Post-translationally, ubiquitinated on the N-terminus; which is required for proteasomal degradation. Methylation at Lys-104 by EHMT2/G9a inhibits myogenic activity.

The protein localises to the nucleus. In terms of biological role, acts as a transcriptional activator that promotes transcription of muscle-specific target genes and plays a role in muscle differentiation. Together with MYF5 and MYOG, co-occupies muscle-specific gene promoter core region during myogenesis. Induces fibroblasts to differentiate into myoblasts. Interacts with and is inhibited by the twist protein. This interaction probably involves the basic domains of both proteins. The chain is Myoblast determination protein 1 (Myod1) from Rattus norvegicus (Rat).